Reading from the N-terminus, the 392-residue chain is Nicotinate phosphoribosyltransferase (392 aa).

His-216 is subject to Phosphohistidine; by autocatalysis.

Belongs to the NAPRTase family. Transiently phosphorylated on a His residue during the reaction cycle. Phosphorylation strongly increases the affinity for substrates and increases the rate of nicotinate D-ribonucleotide production. Dephosphorylation regenerates the low-affinity form of the enzyme, leading to product release.

It carries out the reaction nicotinate + 5-phospho-alpha-D-ribose 1-diphosphate + ATP + H2O = nicotinate beta-D-ribonucleotide + ADP + phosphate + diphosphate. It functions in the pathway cofactor biosynthesis; NAD(+) biosynthesis; nicotinate D-ribonucleotide from nicotinate: step 1/1. In terms of biological role, catalyzes the synthesis of beta-nicotinate D-ribonucleotide from nicotinate and 5-phospho-D-ribose 1-phosphate at the expense of ATP. The protein is Nicotinate phosphoribosyltransferase of Cupriavidus necator (strain ATCC 17699 / DSM 428 / KCTC 22496 / NCIMB 10442 / H16 / Stanier 337) (Ralstonia eutropha).